A 223-amino-acid chain; its full sequence is ATP-dependent Clp protease proteolytic subunit 2 (223 aa).

The tract at residues 1-40 (MHAGSGNDMDITRMTPTRLDDEPDAPEPETREDDNKTLNS) is disordered. The span at 21-32 (DEPDAPEPETRE) shows a compositional bias: acidic residues. Ser-124 serves as the catalytic Nucleophile. His-149 is a catalytic residue.

Belongs to the peptidase S14 family. In terms of assembly, fourteen ClpP subunits assemble into 2 heptameric rings which stack back to back to give a disk-like structure with a central cavity, resembling the structure of eukaryotic proteasomes.

The protein resides in the cytoplasm. It catalyses the reaction Hydrolysis of proteins to small peptides in the presence of ATP and magnesium. alpha-casein is the usual test substrate. In the absence of ATP, only oligopeptides shorter than five residues are hydrolyzed (such as succinyl-Leu-Tyr-|-NHMec, and Leu-Tyr-Leu-|-Tyr-Trp, in which cleavage of the -Tyr-|-Leu- and -Tyr-|-Trp bonds also occurs).. Its function is as follows. Cleaves peptides in various proteins in a process that requires ATP hydrolysis. Has a chymotrypsin-like activity. Plays a major role in the degradation of misfolded proteins. The sequence is that of ATP-dependent Clp protease proteolytic subunit 2 from Gluconobacter oxydans (strain 621H) (Gluconobacter suboxydans).